Reading from the N-terminus, the 717-residue chain is Polyribonucleotide nucleotidyltransferase (717 aa).

Residues Asp-486 and Asp-492 each contribute to the Mg(2+) site. The KH domain maps to 553-612; it reads PKIVQLQIDIDKISLVIGSTGKTVKAITDEFEVRVQIEQDGRITLFGTDSLKMQKAKAKI. The region spanning 622–715 is the S1 motif domain; sequence GEIYDGIVKK…KFGKIELELV (94 aa). The tract at residues 659 to 689 is disordered; that stretch reads RYGDMRHSRYGSGRHSRYGRDNRNTFGMNPP. Basic residues predominate over residues 666–675; sequence SRYGSGRHSR.

The protein belongs to the polyribonucleotide nucleotidyltransferase family. It depends on Mg(2+) as a cofactor.

The protein localises to the cytoplasm. The enzyme catalyses RNA(n+1) + phosphate = RNA(n) + a ribonucleoside 5'-diphosphate. Functionally, involved in mRNA degradation. Catalyzes the phosphorolysis of single-stranded polyribonucleotides processively in the 3'- to 5'-direction. This is Polyribonucleotide nucleotidyltransferase from Borrelia hermsii (strain HS1 / DAH).